A 1017-amino-acid polypeptide reads, in one-letter code: MSSPFPADTPSSNRPSNSSPPPSSIGAGFGSSSGLDSQIGSRLHFPSSSQPHVSNSQTGPFVNDSTQFSSQRLQTDGSATNDMEGNEPARSFKSRALNHVKKVDDVTGEKVREAFEQFLEDFSVQSTDTGEVEKVYRAQIEFMKIYDLNTIYIDYQHLSMRENGALAMAISEQYYRFLPFLQKGLRRVVRKYAPELLNTSDSLKRSEGDEGQADEDEQQDDDMNGSSLPRDSGSSAAPGNGTSAMATRSITTSTSPEQTERVFQISFFNLPTVHRIRDIRSEKIGSLLSISGTVTRTSEVRPELYKASFTCDMCRAIVDNVEQSFKYTEPTFCPNPSCENRAFWTLNVTRSRFLDWQKVRIQENANEIPTGSMPRTLDVILRGDSVERAKPGDRCKFTGVEIVVPDVTQLGLPGVKPSSTLDTRGISKTTEGLNSGVTGLRSLGVRDLTYKISFLACHVISIGSNIGASSPDANSNNRETELQMAANLQANNVYQDNERDQEVFLNSLSSDEINELKEMVKDEHIYDKLVRSIAPAVFGHEAVKKGILLQMLGGVHKSTVEGIKLRGDINICVVGDPSTSKSQFLKYVVGFAPRSVYTSGKASSAAGLTAAVVRDEEGGDYTIEAGALMLADNGICCIDEFDKMDISDQVAIHEAMEQQTISIAKAGIHATLNARTSILAAANPVGGRYNRKLSLRGNLNMTAPIMSRFDLFFVILDDCNEKIDTELASHIVDLHMKRDEAIEPPFSAEQLRRYIKYARTFKPILTKEARSYLVEKYKELRKDDAQGFSRSSYRITVRQLESMIRLSEAIARANCVDEITPSFIAEAYDLLRQSIIRVDVDDVEMDEEFDNIESQSHAASGNNDDNDDGTGSGVITSEPPADIEEGQSEATARPGTSEKKKTTVTYDKYVSMMNMIVRKIAEVDREGAEELTAVDIVDWYLLQKENDLGSLAEYWEERRLAFKVIKRLVKDRILMEIHGTRHNLRDLENEENENNKTVYVIHPNCEVLDQLEPQDSS.

Disordered regions lie at residues 1 to 94 and 200 to 257; these read MSSP…SFKS and SDSL…TSPE. The segment covering 24–34 has biased composition (low complexity); the sequence is SIGAGFGSSSG. Residues 35 to 83 are compositionally biased toward polar residues; sequence LDSQIGSRLHFPSSSQPHVSNSQTGPFVNDSTQFSSQRLQTDGSATNDM. Ser-78 is subject to Phosphoserine. Over residues 209 to 223 the composition is skewed to acidic residues; sequence DEGQADEDEQQDDDM. Residues 224 to 257 show a composition bias toward polar residues; it reads NGSSLPRDSGSSAAPGNGTSAMATRSITTSTSPE. A phosphoserine mark is found at Ser-249 and Ser-372. The region spanning 525–732 is the MCM domain; the sequence is IYDKLVRSIA…IDTELASHIV (208 aa). 575–582 contacts ATP; sequence GDPSTSKS. Residues 707 to 710 carry the Arginine finger motif; it reads SRFD. Position 766 is a phosphothreonine (Thr-766). Residues 852-901 form a disordered region; that stretch reads IESQSHAASGNNDDNDDGTGSGVITSEPPADIEEGQSEATARPGTSEKKK.

It belongs to the MCM family. In terms of assembly, component of the MCM2-7 complex. The complex forms a toroidal hexameric ring with the proposed subunit order MCM2-MCM6-MCM4-MCM7-MCM3-MCM5; loaded onto DNA, forms a head-head double hexamer. Interacts with MCM10.

The protein resides in the nucleus. It carries out the reaction ATP + H2O = ADP + phosphate + H(+). Functionally, acts as a component of the MCM2-7 complex (MCM complex) which is the putative replicative helicase essential for 'once per cell cycle' DNA replication initiation and elongation in eukaryotic cells. The active ATPase sites in the MCM2-7 ring are formed through the interaction surfaces of two neighboring subunits such that a critical structure of a conserved arginine finger motif is provided in trans relative to the ATP-binding site of the Walker A box of the adjacent subunit. The six ATPase active sites, however, are likely to contribute differentially to the complex helicase activity. Once loaded onto DNA, double hexamers can slide on dsDNA in the absence of ATPase activity. Required for the entry in S phase and for cell division. The protein is DNA replication licensing factor MCM6 (MCM6) of Saccharomyces cerevisiae (strain ATCC 204508 / S288c) (Baker's yeast).